The primary structure comprises 245 residues: Cuticle protein (245 aa).

The Chitin-binding type R&amp;R domain maps to 25-86; that stretch reads VSYAAAPALV…TGDSKSQQES (62 aa). Residues 79–100 form a disordered region; that stretch reads DSKSQQESRSGDVVQGSYSVVD. Repeat copies occupy residues 92-95, 108-111, and 118-121.

Functionally, component of the cuticle of African malaria mosquito. The protein is Cuticle protein (Ccp84Ab) of Anopheles gambiae (African malaria mosquito).